Reading from the N-terminus, the 448-residue chain is Rhodopsin (448 aa).

Residues 2-33 (GRDLRDNETWWYNPSIVVHPHWREFDQVPDAV) are Extracellular-facing. N-linked (GlcNAc...) asparagine glycosylation occurs at Asn-8. A helical membrane pass occupies residues 34–58 (YYSLGIFIGICGIIGCGGNGIVIYL). Topologically, residues 59–70 (FTKTKSLQTPAN) are cytoplasmic. A helical transmembrane segment spans residues 71–97 (MFIINLAFSDFTFSLVNGFPLMTISCF). Over 98–109 (LKKWIFGFAACK) the chain is Extracellular. Cys-108 and Cys-186 are disulfide-bonded. Residues 110–131 (VYGFIGGIFGFMSIMTMAMISI) traverse the membrane as a helical segment. The Cytoplasmic portion of the chain corresponds to 132-151 (DRYNVIGRPMAASKKMSHRR). Residues 152–172 (AFIMIIFVWLWSVLWAIGPIF) form a helical membrane-spanning segment. The Extracellular portion of the chain corresponds to 173-199 (GWGAYTLEGVLCNCSFDYISRDSTTRS). Residues 200 to 224 (NILCMFILGFFGPILIIFFCYFNIV) traverse the membrane as a helical segment. Topologically, residues 225 to 261 (MSVSNHEKEMAAMAKRLNAKELRKAQAGANAEMRLAK) are cytoplasmic. A helical transmembrane segment spans residues 262–283 (ISIVIVSQFLLSWSPYAVVALL). Residues 284–293 (AQFGPLEWVT) lie on the Extracellular side of the membrane. The helical transmembrane segment at 294–315 (PYAAQLPVMFAKASAIHNPMIY) threads the bilayer. Lys-305 is subject to N6-(retinylidene)lysine. Residues 316 to 448 (SVSHPKFREA…QGVDNQAYQA (133 aa)) lie on the Cytoplasmic side of the membrane. S-palmitoyl cysteine attachment occurs at residues Cys-336 and Cys-337. The segment covering 343 to 352 (ETEDDKDAET) has biased composition (acidic residues). Residues 343–448 (ETEDDKDAET…QGVDNQAYQA (106 aa)) form a disordered region. A compositionally biased stretch (low complexity) spans 359-391 (SSDAAPSADAAQMKEMMAMMQKMQQQQAAYPPQ). Residues 392 to 437 (GYAPPPQGYPPQGYPPQGYPPQGYPPQGYPPPPQGAPPQGAPPAAP) show a composition bias toward pro residues.

This sequence belongs to the G-protein coupled receptor 1 family. Opsin subfamily. Post-translationally, contains one covalently linked retinal chromophore. Upon light absorption, the covalently bound 11-cis-retinal is converted to all-trans-retinal. After hydrolysis of the Schiff base and release of the covalently bound all-trans-retinal, active rhodopsin is regenerated by binding of a fresh molecule of 11-cis-retinal. As to expression, retina, rhabdomere membrane of photoreceptor cells (at protein level).

Its subcellular location is the cell projection. The protein localises to the rhabdomere membrane. Its function is as follows. Photoreceptor required for image-forming vision at low light intensity. Light-induced isomerization of 11-cis to all-trans retinal triggers a conformational change that activates signaling via G-proteins. Signaling mediates the activation of phospholipase C. Subsequent receptor phosphorylation mediates displacement of the bound G-protein alpha subunit by arrestin and terminates signaling. The polypeptide is Rhodopsin (RHO) (Todarodes pacificus (Japanese flying squid)).